The following is a 254-amino-acid chain: UPF0246 protein CPR_2119 (254 aa).

It belongs to the UPF0246 family.

In Clostridium perfringens (strain SM101 / Type A), this protein is UPF0246 protein CPR_2119.